We begin with the raw amino-acid sequence, 90 residues long: Probable Fe(2+)-trafficking protein (90 aa).

The protein belongs to the Fe(2+)-trafficking protein family.

Functionally, could be a mediator in iron transactions between iron acquisition and iron-requiring processes, such as synthesis and/or repair of Fe-S clusters in biosynthetic enzymes. This Halorhodospira halophila (strain DSM 244 / SL1) (Ectothiorhodospira halophila (strain DSM 244 / SL1)) protein is Probable Fe(2+)-trafficking protein.